The primary structure comprises 147 residues: Male-specific protein scotti (147 aa).

The segment at proline 55–serine 93 is disordered. Positions tyrosine 82–serine 93 are enriched in polar residues. N-linked (GlcNAc...) asparagine glycosylation is present at asparagine 128.

The protein belongs to the male-specific scotti family. As to expression, expressed in primary spermatocytes and round spermatids. Low expression is seen in very short elongating cysts, but were detected at high levels in a few longer spermatid cysts.

Post-meiotically transcribed gene that has a role in late spermiogenesis; required for actin cone progression during spermatid individualization. The protein is Male-specific protein scotti of Drosophila melanogaster (Fruit fly).